The primary structure comprises 285 residues: Release factor glutamine methyltransferase (285 aa).

S-adenosyl-L-methionine-binding residues include D143 and N189. Substrate is bound at residue 189 to 192 (NPPY).

It belongs to the protein N5-glutamine methyltransferase family. PrmC subfamily.

The catalysed reaction is L-glutaminyl-[peptide chain release factor] + S-adenosyl-L-methionine = N(5)-methyl-L-glutaminyl-[peptide chain release factor] + S-adenosyl-L-homocysteine + H(+). Functionally, methylates the class 1 translation termination release factors RF1/PrfA and RF2/PrfB on the glutamine residue of the universally conserved GGQ motif. In Clostridium acetobutylicum (strain ATCC 824 / DSM 792 / JCM 1419 / IAM 19013 / LMG 5710 / NBRC 13948 / NRRL B-527 / VKM B-1787 / 2291 / W), this protein is Release factor glutamine methyltransferase.